The chain runs to 198 residues: B9 domain-containing protein 1 (198 aa).

The region spanning 8 to 126 (FLLNVSGQIE…TIPMFVPESS (119 aa)) is the C2 B9-type domain.

The protein belongs to the B9D family. Part of the tectonic-like complex (also named B9 complex).

It localises to the cytoplasm. Its subcellular location is the cytoskeleton. The protein resides in the cilium basal body. Functionally, component of the tectonic-like complex, a complex localized at the transition zone of primary cilia and acting as a barrier that prevents diffusion of transmembrane proteins between the cilia and plasma membranes. Required for ciliogenesis and sonic hedgehog/SHH signaling. The protein is B9 domain-containing protein 1 (b9d1) of Xenopus laevis (African clawed frog).